The following is a 431-amino-acid chain: D-inositol 3-phosphate glycosyltransferase (431 aa).

His-21 is a 1D-myo-inositol 3-phosphate binding site. UDP-N-acetyl-alpha-D-glucosamine contacts are provided by residues 27–28 and Gly-35; that span reads QP. 1D-myo-inositol 3-phosphate-binding positions include 32 to 37, Arg-90, Tyr-123, Thr-147, and Arg-167; that span reads DAGGMN. The UDP-N-acetyl-alpha-D-glucosamine site is built by Arg-241, Lys-246, and Gln-307. Mg(2+) is bound by residues Tyr-316, Arg-317, and Ala-319. Residues Glu-329 and Glu-337 each coordinate UDP-N-acetyl-alpha-D-glucosamine. Residue Thr-343 participates in Mg(2+) binding.

This sequence belongs to the glycosyltransferase group 1 family. MshA subfamily. Homodimer.

The enzyme catalyses 1D-myo-inositol 3-phosphate + UDP-N-acetyl-alpha-D-glucosamine = 1D-myo-inositol 2-acetamido-2-deoxy-alpha-D-glucopyranoside 3-phosphate + UDP + H(+). Functionally, catalyzes the transfer of a N-acetyl-glucosamine moiety to 1D-myo-inositol 3-phosphate to produce 1D-myo-inositol 2-acetamido-2-deoxy-glucopyranoside 3-phosphate in the mycothiol biosynthesis pathway. This Saccharomonospora viridis (strain ATCC 15386 / DSM 43017 / JCM 3036 / CCUG 5913 / NBRC 12207 / NCIMB 9602 / P101) (Thermoactinomyces viridis) protein is D-inositol 3-phosphate glycosyltransferase.